The chain runs to 312 residues: Glyoxylate/hydroxypyruvate reductase A (312 aa).

Arginine 227 is an active-site residue. Residue histidine 275 is the Proton donor of the active site.

This sequence belongs to the D-isomer specific 2-hydroxyacid dehydrogenase family. GhrA subfamily.

It localises to the cytoplasm. It carries out the reaction glycolate + NADP(+) = glyoxylate + NADPH + H(+). The catalysed reaction is (R)-glycerate + NAD(+) = 3-hydroxypyruvate + NADH + H(+). The enzyme catalyses (R)-glycerate + NADP(+) = 3-hydroxypyruvate + NADPH + H(+). Its function is as follows. Catalyzes the NADPH-dependent reduction of glyoxylate and hydroxypyruvate into glycolate and glycerate, respectively. The chain is Glyoxylate/hydroxypyruvate reductase A from Escherichia coli O127:H6 (strain E2348/69 / EPEC).